Reading from the N-terminus, the 579-residue chain is Probable serine/threonine-protein kinase kinY (579 aa).

The interval 1–24 (MINGEQTMVEDELPDQGKPMSDES) is disordered. A Protein kinase domain is found at 32-309 (LKVGESIGSG…HVLKQLTSLF (278 aa)). Residues 38–46 (IGSGAYGIV) and Lys-59 each bind ATP. Asp-167 serves as the catalytic Proton acceptor.

Belongs to the protein kinase superfamily. TKL Ser/Thr protein kinase family.

It catalyses the reaction L-seryl-[protein] + ATP = O-phospho-L-seryl-[protein] + ADP + H(+). The catalysed reaction is L-threonyl-[protein] + ATP = O-phospho-L-threonyl-[protein] + ADP + H(+). The sequence is that of Probable serine/threonine-protein kinase kinY (kinY) from Dictyostelium discoideum (Social amoeba).